The primary structure comprises 84 residues: Small ribosomal subunit protein bS18B (84 aa).

The protein belongs to the bacterial ribosomal protein bS18 family. In terms of assembly, part of the 30S ribosomal subunit. Forms a tight heterodimer with protein bS6.

Binds as a heterodimer with protein bS6 to the central domain of the 16S rRNA, where it helps stabilize the platform of the 30S subunit. The sequence is that of Small ribosomal subunit protein bS18B from Mycolicibacterium smegmatis (strain ATCC 700084 / mc(2)155) (Mycobacterium smegmatis).